The following is a 508-amino-acid chain: MKKAIAYMRFSSPGQMSGDSLNRQRRLIAEWLKVNSDYYLDTITYEDLGLSAFKGKHAQSGAFSEFLDAIEHGYILPGTTLLVESLDRLSREKVGEAIERLKLILNHGIDVITLCDNTVYNIDSLNEPYSLIKAILIAQRANEESEIKSSRVKLSWKKKRQDALESGTIMTASCPRWLSLDDKRTAFVPDPDRVKTIELIFKLRMERRSLNAIAKYLNDHAVKNFSGKESAWGPSVIEKLLANKALIGICVPSYRARGKGISEIAGYYPRVISDDLFYAVQEIRLAPFGISNSSKNPMLINLLRTVMKCEACGNTMIVHAVSGSLHGYYVCPMRRLHRCDRPSIKRDLVDYNIINELLFNCSKIQPVENKKDANETLELKIIELQMKINNLIVALSVAPEVTAIAEKIRLLDKELRRASVSLKTLKSKGVNSFSDFYAIDLTSKNGRELCRTLAYKTFEKIIINTDNKTCDIYFMNGIVFKHYPLMKVISAQQAISALKYMVDGEIYF.

In terms of domain architecture, Resolvase/invertase-type recombinase catalytic spans 3–163 (KAIAYMRFSS…LSWKKKRQDA (161 aa)). The active-site O-(5'-phospho-DNA)-serine intermediate is S11. The recombinase DNA-binding region spans 175 to 290 (PRWLSLDDKR…QEIRLAPFGI (116 aa)).

This is an uncharacterized protein from Escherichia coli (strain K12).